A 132-amino-acid polypeptide reads, in one-letter code: MKVVNSSGKKKTAIARATFKEGKGRIRINNVPLEIIEPALARMKMMEPVIMAAEAFSSVDVDVSVMGGGVMGQADAVRTALARGILEWTGDAALKEAYAEYDRNLLVSDHRQKEKKKFGGLGARAKYQKSYR.

Belongs to the universal ribosomal protein uS9 family.

This chain is Small ribosomal subunit protein uS9, found in Methanothrix thermoacetophila (strain DSM 6194 / JCM 14653 / NBRC 101360 / PT) (Methanosaeta thermophila).